The primary structure comprises 217 residues: Cytochrome b5 domain-containing protein 1 (217 aa).

The region spanning 6–72 is the Cytochrome b5 heme-binding domain; it reads PRFYTPREVS…NPKTGDVKTH (67 aa). Heme contacts are provided by histidine 41 and histidine 72.

It belongs to the cytochrome b5 family.

The protein localises to the cytoplasm. It is found in the cytoskeleton. Its subcellular location is the cilium axoneme. Radial spoke stalk protein that binds heme under oxidizing conditions. Required for the coordinated beating of multiple cilia maybe by functioning in a redox signaling pathway. This chain is Cytochrome b5 domain-containing protein 1 (cyb5d1), found in Xenopus tropicalis (Western clawed frog).